Reading from the N-terminus, the 232-residue chain is Octanoyltransferase (232 aa).

The BPL/LPL catalytic domain maps to Leu43–Ile231. Substrate is bound by residues Arg88–His95, Ala160–Gly162, and Gly173–Ala175. Residue Cys191 is the Acyl-thioester intermediate of the active site.

It belongs to the LipB family.

It is found in the cytoplasm. It carries out the reaction octanoyl-[ACP] + L-lysyl-[protein] = N(6)-octanoyl-L-lysyl-[protein] + holo-[ACP] + H(+). The protein operates within protein modification; protein lipoylation via endogenous pathway; protein N(6)-(lipoyl)lysine from octanoyl-[acyl-carrier-protein]: step 1/2. Functionally, catalyzes the transfer of endogenously produced octanoic acid from octanoyl-acyl-carrier-protein onto the lipoyl domains of lipoate-dependent enzymes. Lipoyl-ACP can also act as a substrate although octanoyl-ACP is likely to be the physiological substrate. The polypeptide is Octanoyltransferase (Flavobacterium johnsoniae (strain ATCC 17061 / DSM 2064 / JCM 8514 / BCRC 14874 / CCUG 350202 / NBRC 14942 / NCIMB 11054 / UW101) (Cytophaga johnsonae)).